Reading from the N-terminus, the 538-residue chain is MFPKTSFTSLIVGVFLLYVLHTCWVMYGIVYTKPCEKRRAESCISPYLAAKPRLQLSVYTALRPNADGGHSLIHREEEFDVNTKFEKLVNVSLPKKTRKNGTLYAMVFLHQAGVSPWQDPHQVHLVTQLTTYMLPKPPEISLITGQDEPEKPDQQKQSSDSELDRPVSHWRSRLTLNVVSENFLFDREALPGDVHRYMRVYQSGKKMIYLPLLFVDELSNRVKDLMEINSSSTELPLTITYDSIALGKLRFWIHMQDAVYSLQQFGFTEKDADEIKGIFVDTNLYFLALTFFVAAFHLLFDFLAFKNDISFWKHKKSMVGMSSKAVLWRCFSTIVIFLYLLDEQTSLLVLVPAGIGSLIEVWKVKKAFKIHVIWRGLTPTFLFGKLDESEKRTEEYDTLAMKYLSYLLYPLCVGGAVYALVFVKYKSWYSWIINSLVNGVYAFGFLFMLPQLFVNYKLKSVAHLPWKAFMYKAFNTFIDDVFAFIITMPTSHRLACFRDDVVFLVYLYQRWLYPVDRSRVNEYGVSYDEKPKGKSHED.

Residues 1–9 are Cytoplasmic-facing; it reads MFPKTSFTS. The chain crosses the membrane as a helical span at residues 10–30; sequence LIVGVFLLYVLHTCWVMYGIV. At 31–284 the chain is on the extracellular side; sequence YTKPCEKRRA…IKGIFVDTNL (254 aa). Residues Asn90 and Asn100 are each glycosylated (N-linked (GlcNAc...) asparagine). The interval 140–166 is disordered; that stretch reads ISLITGQDEPEKPDQQKQSSDSELDRP. Asn229 is a glycosylation site (N-linked (GlcNAc...) asparagine). A helical membrane pass occupies residues 285–305; sequence YFLALTFFVAAFHLLFDFLAF. The Cytoplasmic portion of the chain corresponds to 306–324; that stretch reads KNDISFWKHKKSMVGMSSK. A helical transmembrane segment spans residues 325–341; that stretch reads AVLWRCFSTIVIFLYLL. Residues 342–402 lie on the Extracellular side of the membrane; the sequence is DEQTSLLVLV…TEEYDTLAMK (61 aa). A helical transmembrane segment spans residues 403 to 423; it reads YLSYLLYPLCVGGAVYALVFV. Residues 424–428 are Cytoplasmic-facing; that stretch reads KYKSW. Residues 429–449 traverse the membrane as a helical segment; the sequence is YSWIINSLVNGVYAFGFLFML. At 450–538 the chain is on the extracellular side; sequence PQLFVNYKLK…EKPKGKSHED (89 aa).

It belongs to the CLPTM1 family.

The protein resides in the endoplasmic reticulum membrane. It catalyses the reaction a 6-(alpha-D-glucosaminyl)-1-(1,2-diacyl-sn-glycero-3-phospho)-1D-myo-inositol(in) = a 6-(alpha-D-glucosaminyl)-1-(1,2-diacyl-sn-glycero-3-phospho)-1D-myo-inositol(out). It carries out the reaction 6-(alpha-D-glucosaminyl)-(1-octadecanoyl,2-(9Z)-octadecenoyl-sn-glycero-3-phospho)-1D-myo-inositol(in) = 6-(alpha-D-glucosaminyl)-(1-octadecanoyl,2-(9Z)-octadecenoyl-sn-glycero-3-phospho)-1D-myo-inositol(out). The catalysed reaction is a 1,2-diacyl-sn-glycero-3-phospho-(1D-myo-inositol)(in) = a 1,2-diacyl-sn-glycero-3-phospho-(1D-myo-inositol)(out). The enzyme catalyses a 1,2-diacyl-sn-glycero-3-phosphocholine(in) = a 1,2-diacyl-sn-glycero-3-phosphocholine(out). It catalyses the reaction a 1,2-diacyl-sn-glycero-3-phosphoethanolamine(in) = a 1,2-diacyl-sn-glycero-3-phosphoethanolamine(out). Functionally, scramblase that mediates the translocation of glucosaminylphosphatidylinositol (alpha-D-GlcN-(1-6)-(1,2-diacyl-sn-glycero-3-phospho)-1D-myo-inositol, GlcN-PI) across the endoplasmic reticulum (ER) membrane, from the cytosolic leaflet to the luminal leaflet of the ER membrane, where it participates in the biosynthesis of glycosylphosphatidylinositol (GPI). GPI is a lipid glycoconjugate involved in post-translational modification of proteins. Can also translocate 1,2-diacyl-sn-glycero-3-phospho-(1D-myo-inositol) (phosphatidylinositol or PI), as well as several other phospholipids (1,2-diacyl-sn-glycero-3-phosphocholine, 1,2-diacyl-sn-glycero-3-phosphoethanolamine), and N-acetylglucosaminylphosphatidylinositol (GlcNAc-PI) in vitro. This chain is Lipid scramblase CLPTM1L (clptm1l), found in Danio rerio (Zebrafish).